Reading from the N-terminus, the 743-residue chain is Serine-rich coiled-coil domain-containing protein 1 (743 aa).

2 disordered regions span residues 1 to 125 (MGDS…SRNK) and 156 to 175 (KSEGDDSGFTEEQTRRSVKQ). Over residues 29-56 (LPSSPSSSNTVGVHSSSPSSTNSSSGST) the composition is skewed to low complexity. Residues 81 to 102 (EPTNQNLSISNGAQPGQSSMQK) show a composition bias toward polar residues. Positions 672-713 (MKDECSMLKLQLKEKDELISQLQEELEKVQHLQKAFASRVDK) form a coiled coil.

The protein belongs to the CCSER family.

The chain is Serine-rich coiled-coil domain-containing protein 1 (CCSER1) from Bos taurus (Bovine).